Reading from the N-terminus, the 365-residue chain is Iron-sulfur cluster assembly protein SufC (365 aa).

Residues 118–364 (LEINDLHAIE…ESDGYAQFVE (247 aa)) form the ABC transporter domain. 152-159 (GRNGSGKS) is an ATP binding site.

This sequence belongs to the ABC transporter superfamily. Ycf16 family. Component of a complex composed of SufB, SufC and SufD in a stoichiometric ratio of 1:2:1. Interacts with SufB. Interacts with SufD; the interaction enhances the ATPase activity of SufC.

It is found in the plastid. It localises to the apicoplast. It catalyses the reaction ATP + H2O = ADP + phosphate + H(+). The protein operates within cofactor biosynthesis; iron-sulfur cluster biosynthesis. Its function is as follows. Participates in the sulfur mobilization (SUF) pathway for iron-sulfur (Fe-S) cluster biogenesis. As part of a complex consisting of SufB-SufC(2)-SufD, involved in assembly of [4Fe-4S] clusters. Exhibits ATPase activity. In Plasmodium berghei (strain Anka), this protein is Iron-sulfur cluster assembly protein SufC.